The sequence spans 603 residues: Variable flagella 3 (603 aa).

The stretch at 169–289 (GGEVSAELRR…TEDLEARDRR (121 aa)) forms a coiled coil. The span at 288-297 (RRMNSTDRIR) shows a compositional bias: basic and acidic residues. Disordered regions lie at residues 288-526 (RRMN…PARA) and 539-564 (AGRGGSLQGDDASSAHGEHMSQSSKS). Residues 337–348 (SRSNSRGRGTSS) show a composition bias toward low complexity. The span at 364–380 (PRFDPTEYVRQRKERES) shows a compositional bias: basic and acidic residues. Residues 397-406 (AGTSRASSVV) are compositionally biased toward polar residues. Gly residues predominate over residues 486 to 510 (GASGGGAGGWSKFPGGGGGGVGGSG). Positions 511–520 (QRISSNSPRS) are enriched in polar residues.

It belongs to the CCDC61 family.

It is found in the cytoplasm. Its subcellular location is the cytoskeleton. The protein localises to the flagellum basal body. In terms of biological role, required for normal flagella and striated fiber formation. This Chlamydomonas reinhardtii (Chlamydomonas smithii) protein is Variable flagella 3.